Here is an 850-residue protein sequence, read N- to C-terminus: DNA polymerase I (850 aa).

Positions 1–288 (MKLVIFDGNS…SIIKRLGLSE (288 aa)) constitute a 5'-3' exonuclease domain. Positions 470–850 (VDRDALIQYT…KEGLNWYETK (381 aa)) are polymerase.

It belongs to the DNA polymerase type-A family.

The catalysed reaction is DNA(n) + a 2'-deoxyribonucleoside 5'-triphosphate = DNA(n+1) + diphosphate. In addition to polymerase activity, this DNA polymerase exhibits 3'-5' and 5'-3' exonuclease activity. In Caldicellulosiruptor bescii (strain ATCC BAA-1888 / DSM 6725 / KCTC 15123 / Z-1320) (Anaerocellum thermophilum), this protein is DNA polymerase I (polA).